The chain runs to 295 residues: tRNA pseudouridine synthase A (295 aa).

Residue D67 is the Nucleophile of the active site. Y125 contacts substrate.

The protein belongs to the tRNA pseudouridine synthase TruA family. As to quaternary structure, homodimer.

The enzyme catalyses uridine(38/39/40) in tRNA = pseudouridine(38/39/40) in tRNA. Functionally, formation of pseudouridine at positions 38, 39 and 40 in the anticodon stem and loop of transfer RNAs. The chain is tRNA pseudouridine synthase A from Prochlorococcus marinus (strain MIT 9303).